A 931-amino-acid chain; its full sequence is Protein translocase subunit SecA (931 aa).

ATP contacts are provided by residues Q87, 105–109 (GEGKT), and D515. Zn(2+)-binding residues include C915, C917, C926, and H927.

The protein belongs to the SecA family. In terms of assembly, monomer and homodimer. Part of the essential Sec protein translocation apparatus which comprises SecA, SecYEG and auxiliary proteins SecDF-YajC and YidC. Zn(2+) is required as a cofactor.

It is found in the cell inner membrane. Its subcellular location is the cytoplasm. The catalysed reaction is ATP + H2O + cellular proteinSide 1 = ADP + phosphate + cellular proteinSide 2.. Its function is as follows. Part of the Sec protein translocase complex. Interacts with the SecYEG preprotein conducting channel. Has a central role in coupling the hydrolysis of ATP to the transfer of proteins into and across the cell membrane, serving both as a receptor for the preprotein-SecB complex and as an ATP-driven molecular motor driving the stepwise translocation of polypeptide chains across the membrane. In Burkholderia ambifaria (strain ATCC BAA-244 / DSM 16087 / CCUG 44356 / LMG 19182 / AMMD) (Burkholderia cepacia (strain AMMD)), this protein is Protein translocase subunit SecA.